The following is a 102-amino-acid chain: MQKIRKGDKVVMLAGKDKGRTGEVVQVMPKEDRAVVRGVNVVKRHQRQTQTQEAGIINKEASVHLSNVAIVDKDGKPTRVGFKVVDGKKVRVAKRSGEVIDG.

It belongs to the universal ribosomal protein uL24 family. In terms of assembly, part of the 50S ribosomal subunit.

Its function is as follows. One of two assembly initiator proteins, it binds directly to the 5'-end of the 23S rRNA, where it nucleates assembly of the 50S subunit. In terms of biological role, one of the proteins that surrounds the polypeptide exit tunnel on the outside of the subunit. The chain is Large ribosomal subunit protein uL24 from Rhizobium leguminosarum bv. trifolii (strain WSM2304).